Reading from the N-terminus, the 208-residue chain is Microcin J25-processing protein McjB (208 aa).

The protein localises to the cytoplasm. Functionally, along with McjC, necessary and sufficient to process the inactive microcin J25 (McjA) precursor into the active peptide. In Escherichia coli, this protein is Microcin J25-processing protein McjB (mcjB).